A 283-amino-acid chain; its full sequence is MFS-type transporter eupM (283 aa).

A run of 7 helical transmembrane segments spans residues 68-88 (LVAWLQVLGAWVLFFNTWGAM), 111-131 (IAWIGSIQTFCLQAMGLVAGP), 136-156 (GGFKILIVTGSVGVVSGYMML), 165-185 (VLLAQGFLIGIAEGCLFTPMI), 196-216 (IGLATGIASSGSSMGGVVYPI), 227-247 (FAWTTRVLGFISLGMLLIPII), and 263-283 (LIDLSVFTDWPFIVFVIATMI).

The protein belongs to the major facilitator superfamily. Monocarboxylate porter (TC 2.A.1.13) family.

The protein localises to the membrane. Functionally, MFS-type transporter; part of the gene cluster that mediates the biosynthesis of eupenifeldin, a bistropolone meroterpenoid that acts as an antitumor agent. The polypeptide is MFS-type transporter eupM (Phoma sp).